We begin with the raw amino-acid sequence, 349 residues long: uncharacterized protein (349 aa).

The next 10 membrane-spanning stretches (helical) occupy residues 15–35, 53–73, 91–111, 120–140, 147–167, 179–199, 218–238, 248–268, 276–296, and 302–322; these read VHSP…NPVT, ISFC…MILI, WFLL…LMFS, NVVL…ILLL, LSMV…FWGV, FGLG…TTIL, LLGT…DHFM, WMLI…LAGL, INLA…LILL, and AQYL…IDNL. EamA domains follow at residues 39 to 164 and 191 to 319; these read IELG…VTVF and FISA…LSFI.

It belongs to the EamA transporter family.

Its subcellular location is the cell membrane. This is an uncharacterized protein from Synechocystis sp. (strain ATCC 27184 / PCC 6803 / Kazusa).